The chain runs to 194 residues: Holliday junction branch migration complex subunit RuvA (194 aa).

The tract at residues 1 to 64 (MISRLTGKLV…EDAHLLFGFA (64 aa)) is domain I. A domain II region spans residues 65–143 (TAEERKTFRQ…AHAVTDGLFA (79 aa)). Residues 144-147 (AAPA) form a flexible linker region. The segment at 147–194 (AADETEDIVGTLLALGYSEREAKAAVKGVPEGTDVGEGVRLALKNLLK) is domain III.

The protein belongs to the RuvA family. As to quaternary structure, homotetramer. Forms an RuvA(8)-RuvB(12)-Holliday junction (HJ) complex. HJ DNA is sandwiched between 2 RuvA tetramers; dsDNA enters through RuvA and exits via RuvB. An RuvB hexamer assembles on each DNA strand where it exits the tetramer. Each RuvB hexamer is contacted by two RuvA subunits (via domain III) on 2 adjacent RuvB subunits; this complex drives branch migration. In the full resolvosome a probable DNA-RuvA(4)-RuvB(12)-RuvC(2) complex forms which resolves the HJ.

It localises to the cytoplasm. The RuvA-RuvB-RuvC complex processes Holliday junction (HJ) DNA during genetic recombination and DNA repair, while the RuvA-RuvB complex plays an important role in the rescue of blocked DNA replication forks via replication fork reversal (RFR). RuvA specifically binds to HJ cruciform DNA, conferring on it an open structure. The RuvB hexamer acts as an ATP-dependent pump, pulling dsDNA into and through the RuvAB complex. HJ branch migration allows RuvC to scan DNA until it finds its consensus sequence, where it cleaves and resolves the cruciform DNA. The sequence is that of Holliday junction branch migration complex subunit RuvA from Neisseria meningitidis serogroup A / serotype 4A (strain DSM 15465 / Z2491).